A 470-amino-acid chain; its full sequence is 6-phospho-beta-galactosidase 1 (470 aa).

Residues Q23, H120, N163, E164, and N300 each coordinate D-galactose 6-phosphate. E164 functions as the Proton donor in the catalytic mechanism. The active-site Nucleophile is the E378. Positions 434, 435, 441, and 443 each coordinate D-galactose 6-phosphate.

The protein belongs to the glycosyl hydrolase 1 family.

It carries out the reaction a 6-phospho-beta-D-galactoside + H2O = D-galactose 6-phosphate + an alcohol. The protein operates within carbohydrate metabolism; lactose degradation; D-galactose 6-phosphate and beta-D-glucose from lactose 6-phosphate: step 1/1. The chain is 6-phospho-beta-galactosidase 1 from Streptococcus pneumoniae (strain ATCC BAA-255 / R6).